The following is a 438-amino-acid chain: (3,5-dihydroxyphenyl)acetyl-CoA 1,2-dioxygenase (438 aa).

Residues Asp183, Glu189, 222-225, 233-238, Gly296, 325-327, and Gln416 contribute to the substrate site; these read HPRY, AGINLK, and IPG.

Belongs to the enoyl-CoA hydratase/isomerase family. Homohexamer; dimer of trimers.

The catalysed reaction is (3,5-dihydroxyphenyl)acetyl-CoA + O2 = 2-(3,5-dihydroxyphenyl)-2-oxoacetate + CoA + H(+). Inhibited by DPA-S-(N-acetylcysteamine). Its function is as follows. Involved in the biosynthesis of the nonproteinogenic amino acid monomer (S)-3,5-dihydroxyphenylglycine (Dpg) responsible of the production of vancomycin and teicoplanin antibiotics. Catalyzes the unusual conversion 3,5-dihydroxyphenylacetyl-CoA (DPA-CoA) to 3,5-dihydroxyphenylglyoxylate. DpgC performed a net four-electron oxidation of the benzylic carbon of DPA-CoA and the hydrolysis of the thioester bond to generate free CoA. DpgC has the ability to process a diverse range of substituted phenylacetyl-CoA substrates. In Streptomyces toyocaensis, this protein is (3,5-dihydroxyphenyl)acetyl-CoA 1,2-dioxygenase.